The chain runs to 84 residues: Cytochrome b559 subunit alpha (84 aa).

Residues 22-36 (VIHSITIPALFVAGW) traverse the membrane as a helical segment. His-24 is a heme binding site.

It belongs to the PsbE/PsbF family. In terms of assembly, heterodimer of an alpha subunit and a beta subunit. PSII is composed of 1 copy each of membrane proteins PsbA, PsbB, PsbC, PsbD, PsbE, PsbF, PsbH, PsbI, PsbJ, PsbK, PsbL, PsbM, PsbT, PsbX, PsbY, PsbZ, Psb30/Ycf12, at least 3 peripheral proteins of the oxygen-evolving complex and a large number of cofactors. It forms dimeric complexes. Heme b is required as a cofactor.

Its subcellular location is the plastid. The protein resides in the chloroplast thylakoid membrane. This b-type cytochrome is tightly associated with the reaction center of photosystem II (PSII). PSII is a light-driven water:plastoquinone oxidoreductase that uses light energy to abstract electrons from H(2)O, generating O(2) and a proton gradient subsequently used for ATP formation. It consists of a core antenna complex that captures photons, and an electron transfer chain that converts photonic excitation into a charge separation. The protein is Cytochrome b559 subunit alpha of Porphyra purpurea (Red seaweed).